Here is a 522-residue protein sequence, read N- to C-terminus: Tetratricopeptide repeat protein 39C (522 aa).

3 TPR repeats span residues 254-287 (SLFM…AVDQ), 292-325 (HVCL…SRWS), and 424-457 (GLKH…ESCR).

Belongs to the TTC39 family.

This is Tetratricopeptide repeat protein 39C (Ttc39c) from Rattus norvegicus (Rat).